A 236-amino-acid chain; its full sequence is MNKKYFKKYSSILIFSMSILAPMTLASCSYNLAKEKDKDQKESTNLSEPNKSNTSKTNTFQDKKDSTNKIDSQESSKTQSQNTSESNQNTKVDSSKTNNLATNQNNPSKSNVNIQETNETKQEQNINPNNAVISEKQAENDKNASSLNSKQINNTLKNQDKTKQENDQFKQESKDSSNFTSPKPITHDPINKVISSQSTTRLEMPKNDQSNSESEDNKKSPESPKWWEKLNQGDAF.

Positions 1-27 (MNKKYFKKYSSILIFSMSILAPMTLAS) are cleaved as a signal peptide. Residue cysteine 28 is the site of N-palmitoyl cysteine attachment. Cysteine 28 is lipidated: S-diacylglycerol cysteine. Disordered stretches follow at residues 35-112 (EKDK…KSNV) and 134-236 (SEKQ…GDAF). Residues 43–60 (STNLSEPNKSNTSKTNTF) show a composition bias toward polar residues. Basic and acidic residues predominate over residues 61 to 74 (QDKKDSTNKIDSQE). Composition is skewed to polar residues over residues 75-112 (SSKT…KSNV) and 143-157 (NASS…NTLK). Positions 158-175 (NQDKTKQENDQFKQESKD) are enriched in basic and acidic residues. Residues 193 to 212 (VISSQSTTRLEMPKNDQSNS) are compositionally biased toward polar residues. Residues 215–228 (EDNKKSPESPKWWE) show a composition bias toward basic and acidic residues.

It belongs to the M.pulmonis LipAB lipoprotein family.

The protein resides in the cell membrane. This Mycoplasmopsis pulmonis (strain UAB CTIP) (Mycoplasma pulmonis) protein is Lipoprotein B (lipB).